The following is a 406-amino-acid chain: Ascaroside receptor GPR2 (406 aa).

Residues 1 to 29 (MTQLPYLLDRRGGALAAPATAWGDMMLNR) are Extracellular-facing. Residues 30–50 (ALFSVALLSSVGSAWVVLSYA) form a helical membrane-spanning segment. Residues 51 to 61 (CIKELRSYRHQ) are Cytoplasmic-facing. A helical membrane pass occupies residues 62 to 82 (LILGLAISDLLMSLNFMFSAG). The Extracellular segment spans residues 83 to 107 (WNVAGGDLALEESRTACSVNGFLTQ). C99 and C173 form a disulfide bridge. The chain crosses the membrane as a helical span at residues 108–128 (VFVVQTDWWILVIAIATYIIL). Topologically, residues 129–143 (GNFKTQSQFIQTHVW) are cytoplasmic. A helical membrane pass occupies residues 144 to 164 (IPWVGPWVLSIIIAAICHGVL). The Extracellular segment spans residues 165–185 (GYGYIGGWCWLTSDLMRLLIN). The helical transmembrane segment at 186 to 206 (FIPRWLIVIAIALIYIRLYMI) threads the bilayer. Over 207 to 326 (VRKARKWDIE…AAQLKRIAKK (120 aa)) the chain is Cytoplasmic. A helical transmembrane segment spans residues 327 to 347 (MMVYPVAYAIIWACPTAIRIY). Over 348–356 (QGTTGSRAP) the chain is Extracellular. Residues 357–377 (LWITIVDKSCIVIQGLVDAVV) traverse the membrane as a helical segment. Residues 378-406 (YGLNERAWQGWRDHIRRIIYKNEGGRIIG) are Cytoplasmic-facing.

Belongs to the G-protein coupled receptor 1 family. Interacts with ascaroside receptor GPR3; may form a functional heterodimer. Interacts with guanine nucleotide-binding protein alpha GPA2; to activate adenylate cyclase and positively regulate nematode trap formation.

The protein resides in the cell membrane. In terms of biological role, g protein-coupled receptor that senses nematode ascaroside pheromones and signals via adenylate cyclase to positively regulate trap formation for nematode capture. The sequence is that of Ascaroside receptor GPR2 from Arthrobotrys oligospora (strain ATCC 24927 / CBS 115.81 / DSM 1491) (Nematode-trapping fungus).